The chain runs to 128 residues: Methylglyoxal synthase (128 aa).

An MGS-like domain is found at 1–128 (MRIALIAHDR…MQDHPGNRQA (128 aa)). Substrate contacts are provided by residues histidine 8, lysine 12, 34–37 (TGTT), and 54–55 (SG). Aspartate 60 functions as the Proton donor/acceptor in the catalytic mechanism. Position 87 (histidine 87) interacts with substrate.

This sequence belongs to the methylglyoxal synthase family.

It catalyses the reaction dihydroxyacetone phosphate = methylglyoxal + phosphate. Its function is as follows. Catalyzes the formation of methylglyoxal from dihydroxyacetone phosphate. This Moorella thermoacetica (strain ATCC 39073 / JCM 9320) protein is Methylglyoxal synthase.